Here is a 126-residue protein sequence, read N- to C-terminus: Small ribosomal subunit protein uS13 (126 aa).

The interval 96-126 is disordered; it reads LPVHGQRTHTNARTRKGPRRAIAGKKKAGKK.

The protein belongs to the universal ribosomal protein uS13 family. As to quaternary structure, part of the 30S ribosomal subunit. Forms a loose heterodimer with protein S19. Forms two bridges to the 50S subunit in the 70S ribosome.

Functionally, located at the top of the head of the 30S subunit, it contacts several helices of the 16S rRNA. In the 70S ribosome it contacts the 23S rRNA (bridge B1a) and protein L5 of the 50S subunit (bridge B1b), connecting the 2 subunits; these bridges are implicated in subunit movement. Contacts the tRNAs in the A and P-sites. This is Small ribosomal subunit protein uS13 from Frankia alni (strain DSM 45986 / CECT 9034 / ACN14a).